A 476-amino-acid chain; its full sequence is Protein transport protein Sec61 subunit alpha-like 1 (476 aa).

The Cytoplasmic portion of the chain corresponds to 2–33 (AIKFLEVIKPFCAVLPEIQKPERKIQFREKVL). Residues 34 to 53 (WTAITLFIFLVCCQIPLFGI) form a helical membrane-spanning segment. The Lumenal segment spans residues 54–76 (MSSDSADPFYWMRVILASNRGTL). A helical transmembrane segment spans residues 77–96 (MELGISPIVTSGLIMQLLAG). At 97 to 117 (AKIIEVGDTPKDRALFNGAQK) the chain is on the cytoplasmic side. A helical transmembrane segment spans residues 118–138 (LFGMIITIGQAIVYVMTGMYG). The Lumenal segment spans residues 139–144 (DPSEMG). The chain crosses the membrane as a helical span at residues 145–165 (AGICLLIIIQLFVAGLIVLLL). Topologically, residues 166-172 (DELLQKG) are cytoplasmic. Residues 173–193 (YGLGSGISLFIATNICETIVW) form a helical membrane-spanning segment. Over 194–240 (KAFSPTTVNTGRGTEFEGAIIALFHLLATRTDKVRALREAFYRQNLP) the chain is Lumenal. A helical membrane pass occupies residues 241-261 (NLMNLIATVFVFAVVIYFQGF). The Cytoplasmic portion of the chain corresponds to 262 to 288 (RVDLPIKSARYRGQYNTYPIKLFYTSN). The chain crosses the membrane as a helical span at residues 289 to 309 (IPIILQSALVSNLYVISQMLS). Topologically, residues 310–354 (TRFSGNFLVNLLGTWSDTSSGGPARAYPVGGLCYYLSPPESFGSV) are lumenal. A helical transmembrane segment spans residues 355–375 (LDDPVHAVIYIVFMLGSCAFF). The Cytoplasmic segment spans residues 376-420 (SKTWIEVSGSSAKDVAKQLKEQQMVMRGHRETSMVHELNRYIPTA). The chain crosses the membrane as a helical span at residues 421–441 (AAFGGLCIGGLSVMADFLGAI). Residues 442-445 (GSGT) lie on the Lumenal side of the membrane. A helical transmembrane segment spans residues 446 to 462 (GILLAVTIIYQYFEIFV). Over 463–476 (KEQSEVGSMGALLF) the chain is Cytoplasmic.

This sequence belongs to the SecY/SEC61-alpha family. As to quaternary structure, the SEC61 channel-forming translocon complex consists of channel-forming core components SEC61A1, SEC61B and SEC61G and different auxiliary components such as SEC62 and SEC63. The SEC61 channel associates with the multi-pass translocon (MPT) complex.

It is found in the endoplasmic reticulum membrane. In terms of biological role, component of SEC61 channel-forming translocon complex that mediates transport of signal peptide-containing precursor polypeptides across the endoplasmic reticulum (ER). Forms a ribosome receptor and a gated pore in the ER membrane, both functions required for cotranslational translocation of nascent polypeptides. May cooperate with auxiliary protein SEC62, SEC63 and HSPA5/BiP to enable post-translational transport of small presecretory proteins. The SEC61 channel is also involved in ER membrane insertion of transmembrane proteins: it mediates membrane insertion of the first few transmembrane segments of proteins, while insertion of subsequent transmembrane regions of multi-pass membrane proteins is mediated by the multi-pass translocon (MPT) complex. Plays a role in the pronephric kidney tubule development. This is Protein transport protein Sec61 subunit alpha-like 1 (sec61al1) from Danio rerio (Zebrafish).